The sequence spans 300 residues: RNA polymerase sigma factor RpoH (300 aa).

The sigma-70 factor domain-2 stretch occupies residues 53-122 (LVTSHLRLVA…IQEYILRSWS (70 aa)). The short motif at 77-80 (EVVS) is the Interaction with polymerase core subunit RpoC element. Residues 231–282 (AMGVLNDRERRIFEARRLAEDPVTLEELSSEFDISRERVRQIEVRAFEKVQE) form a sigma-70 factor domain-4 region. Positions 255 to 274 (LEELSSEFDISRERVRQIEV) form a DNA-binding region, H-T-H motif.

It belongs to the sigma-70 factor family. RpoH subfamily. As to quaternary structure, interacts with the RNA polymerase core enzyme.

It localises to the cytoplasm. Sigma factors are initiation factors that promote the attachment of RNA polymerase to specific initiation sites and are then released. This sigma factor is involved in regulation of expression of heat shock genes. This is RNA polymerase sigma factor RpoH from Rhizobium radiobacter (Agrobacterium tumefaciens).